The chain runs to 479 residues: Aldehyde dehydrogenase family 3 member B2 (479 aa).

Residues Glu-223 and Cys-257 contribute to the active site. Cys-476 carries the post-translational modification Cysteine methyl ester. The S-geranylgeranyl cysteine moiety is linked to residue Cys-476. Residues 477–479 constitute a propeptide, removed in mature form; that stretch reads TLL.

The protein belongs to the aldehyde dehydrogenase family. In terms of processing, geranylgeranylation is important for localization to lipid droplets and enzyme activity. In terms of tissue distribution, expressed in testis, white adipose tissue, lung, small intestine, kidney, spleen and liver.

The protein resides in the lipid droplet. It catalyses the reaction an aldehyde + NAD(+) + H2O = a carboxylate + NADH + 2 H(+). It carries out the reaction a long-chain fatty aldehyde + NAD(+) + H2O = a long-chain fatty acid + NADH + 2 H(+). The catalysed reaction is a medium-chain fatty aldehyde + NAD(+) + H2O = a medium-chain fatty acid + NADH + 2 H(+). The enzyme catalyses hexadecanoate + NADH + 2 H(+) = hexadecanal + NAD(+) + H2O. It catalyses the reaction octanal + NAD(+) + H2O = octanoate + NADH + 2 H(+). It functions in the pathway alcohol metabolism; ethanol degradation; acetate from ethanol: step 2/2. In terms of biological role, oxidizes medium and long chain fatty aldehydes in lipid droplets into non-toxic fatty acids. The polypeptide is Aldehyde dehydrogenase family 3 member B2 (Mus musculus (Mouse)).